We begin with the raw amino-acid sequence, 476 residues long: Sulfate adenylyltransferase subunit 1 (476 aa).

The tr-type G domain maps to 24–238 (KSLLRFLTCG…ELLEYVDIDR (215 aa)). The segment at 33–40 (GSVDDGKS) is G1. 33–40 (GSVDDGKS) contacts GTP. The tract at residues 91–95 (GITID) is G2. Residues 112–115 (DTPG) form a G3 region. GTP contacts are provided by residues 112–116 (DTPGH) and 167–170 (NKMD). The tract at residues 167-170 (NKMD) is G4. Positions 205–207 (SAL) are G5.

This sequence belongs to the TRAFAC class translation factor GTPase superfamily. Classic translation factor GTPase family. CysN/NodQ subfamily. Heterodimer composed of CysD, the smaller subunit, and CysN.

The enzyme catalyses sulfate + ATP + H(+) = adenosine 5'-phosphosulfate + diphosphate. It functions in the pathway sulfur metabolism; hydrogen sulfide biosynthesis; sulfite from sulfate: step 1/3. Its function is as follows. With CysD forms the ATP sulfurylase (ATPS) that catalyzes the adenylation of sulfate producing adenosine 5'-phosphosulfate (APS) and diphosphate, the first enzymatic step in sulfur assimilation pathway. APS synthesis involves the formation of a high-energy phosphoric-sulfuric acid anhydride bond driven by GTP hydrolysis by CysN coupled to ATP hydrolysis by CysD. The sequence is that of Sulfate adenylyltransferase subunit 1 from Vibrio cholerae serotype O1 (strain M66-2).